The chain runs to 216 residues: MTRNDLLDRLATTQASALETQGLGLVPMVVEQSGRGERAYDIYSRLLKERVVFMVGEVNDQTANLVVAQLLFLESENPDKDVSLYINSPGGSVSAGLAIYDTMQFIKPDVSTLCMGMAASMGAFLLAAGAKGKRSALPNSRIMIHQPLGGARGQASDIEIQAREILYLRERLNTILSEVTGQPVEKIARDTDRDNFMSGDQAVDYGLIDKVLARRG.

Ser120 functions as the Nucleophile in the catalytic mechanism. His145 is a catalytic residue.

It belongs to the peptidase S14 family. In terms of assembly, fourteen ClpP subunits assemble into 2 heptameric rings which stack back to back to give a disk-like structure with a central cavity, resembling the structure of eukaryotic proteasomes.

It is found in the cytoplasm. The catalysed reaction is Hydrolysis of proteins to small peptides in the presence of ATP and magnesium. alpha-casein is the usual test substrate. In the absence of ATP, only oligopeptides shorter than five residues are hydrolyzed (such as succinyl-Leu-Tyr-|-NHMec, and Leu-Tyr-Leu-|-Tyr-Trp, in which cleavage of the -Tyr-|-Leu- and -Tyr-|-Trp bonds also occurs).. In terms of biological role, cleaves peptides in various proteins in a process that requires ATP hydrolysis. Has a chymotrypsin-like activity. Plays a major role in the degradation of misfolded proteins. The sequence is that of ATP-dependent Clp protease proteolytic subunit from Cupriavidus necator (strain ATCC 17699 / DSM 428 / KCTC 22496 / NCIMB 10442 / H16 / Stanier 337) (Ralstonia eutropha).